A 322-amino-acid polypeptide reads, in one-letter code: Eukaryotic translation initiation factor 3 subunit I (322 aa).

WD repeat units follow at residues 4-43 (GHER…RLGT), 46-85 (GHQG…VIAS), 141-180 (MTES…KVVD), 184-223 (DHSA…CLKS), and 281-322 (GHFG…NIFE).

The protein belongs to the eIF-3 subunit I family. As to quaternary structure, component of the eukaryotic translation initiation factor 3 (eIF-3) complex. The eIF-3 complex interacts with pix.

The protein resides in the cytoplasm. Component of the eukaryotic translation initiation factor 3 (eIF-3) complex, which is involved in protein synthesis of a specialized repertoire of mRNAs and, together with other initiation factors, stimulates binding of mRNA and methionyl-tRNAi to the 40S ribosome. The eIF-3 complex specifically targets and initiates translation of a subset of mRNAs involved in cell proliferation. This Drosophila yakuba (Fruit fly) protein is Eukaryotic translation initiation factor 3 subunit I.